The sequence spans 264 residues: MDCVESYLSGDNSDESPVMHTWFSPSPSPSDSSSSPSSSASSSIGRNSDDGEKSSEDGGDDAGENEVESPYKGPLEMMESLEQVLPVRKGISKYYSGKSKSFTNLTAEAASALTSSSSMKDLAKPENPYSRRRRNLLCHQIWENNKTTPRGGISKKHVMSSSRSALTLAMAVAAGVMTGEGSSSGGDSSPGSSPTTSGSPPRQLHHHQHQMKKLPPLYPRSQGSFGNLTSSQSSLGFCAWRSFSVADFPRCFPATASGIGFNDS.

Disordered stretches follow at residues 1–76 (MDCV…GPLE) and 178–225 (TGEG…QGSF). The span at 29-43 (PSDSSSSPSSSASSS) shows a compositional bias: low complexity. The span at 47–56 (NSDDGEKSSE) shows a compositional bias: basic and acidic residues. Residues 57-67 (DGGDDAGENEV) are compositionally biased toward acidic residues. Low complexity predominate over residues 179–201 (GEGSSSGGDSSPGSSPTTSGSPP). Positions 203–212 (QLHHHQHQMK) are enriched in basic residues.

Its subcellular location is the nucleus. Its function is as follows. Promotes slightly the tolerance to zinc (Zn) and to oxidizing chemicals (e.g. diamide). This is Protein OXIDATIVE STRESS 3 LIKE 1 from Arabidopsis thaliana (Mouse-ear cress).